The following is a 556-amino-acid chain: PTS system fructose-specific EIIB'BC component (556 aa).

PTS EIIB type-2 domains follow at residues 1 to 85 and 106 to 201; these read MKLF…LANG and IVAV…KAFK. Cysteine 112 serves as the catalytic Phosphocysteine intermediate; for EIIB activity. Cysteine 112 bears the Phosphocysteine; by EIIA mark. The region spanning 224-556 is the PTS EIIC type-2 domain; it reads VYKHLMTGVS…AIIKSKNNAE (333 aa). 10 helical membrane passes run 237 to 257, 275 to 295, 302 to 322, 324 to 344, 349 to 369, 390 to 410, 431 to 451, 468 to 488, 490 to 510, and 529 to 549; these read PLVV…FNVI, SGVA…FSIA, VGLI…GGII, GFLA…PASL, PILI…IYLI, VNAI…MGGP, MAAA…ATWI, FVLG…ADPI, VIIS…GLNI, and LKYL…YAII.

It localises to the cell inner membrane. The catalysed reaction is D-fructose(out) + N(pros)-phospho-L-histidyl-[protein] = D-fructose 1-phosphate(in) + L-histidyl-[protein]. In terms of biological role, the phosphoenolpyruvate-dependent sugar phosphotransferase system (sugar PTS), a major carbohydrate active transport system, catalyzes the phosphorylation of incoming sugar substrates concomitantly with their translocation across the cell membrane. The enzyme II FruAB PTS system is involved in fructose transport. The polypeptide is PTS system fructose-specific EIIB'BC component (Haemophilus influenzae (strain ATCC 51907 / DSM 11121 / KW20 / Rd)).